A 188-amino-acid polypeptide reads, in one-letter code: MSEKLQVVTLLGSLRKGSFNGMVARTLPKIAPASMEVNALPSIADIPLYDADVQQEEGFPATVEALAEQIRQADGVVIVTPEYNYSVPGGLKNAIDWLSRLPDQPLAGKPVLIQTSSMGVIGGARCQYHLRQILVFLDAMVMNKPEFMGGVIQNKVDPQTGEVIDQGTLDHLTGQLTAFGEFIQRVKI.

FMN-binding positions include 13-20, 82-85, and serine 117; these read SLRKGSFN and EYNY.

Belongs to the SsuE family. In terms of assembly, homotetramer. Dimer of dimers. The tetrameric configuration has a central role in chromate reductase activity. It depends on FMN as a cofactor.

The enzyme catalyses a quinone + NADH + H(+) = a quinol + NAD(+). It carries out the reaction a quinone + NADPH + H(+) = a quinol + NADP(+). It catalyses the reaction Cr(6+) + 2 NADH + O2 = Cr(3+) + superoxide + 2 NAD(+) + 2 H(+). The catalysed reaction is Cr(6+) + 2 NADPH + O2 = Cr(3+) + superoxide + 2 NADP(+) + 2 H(+). Functionally, catalyzes the reduction of quinones. Acts by simultaneous two-electron transfer, avoiding formation of highly reactive semiquinone intermediates and producing quinols that promote tolerance of H(2)O(2). Quinone reduction is probably the primary biological role of ChrR. Can also reduce toxic chromate to insoluble and less toxic Cr(3+). Catalyzes the transfer of three electrons to Cr(6+) producing Cr(3+) and one electron to molecular oxygen without producing the toxic Cr(5+) species and only producing a minimal amount of reactive oxygen species (ROS). Chromate reduction protects the cell against chromate toxicity, but is likely a secondary activity. The chain is Quinone reductase (chrR) from Escherichia coli O157:H7.